Consider the following 276-residue polypeptide: Ribonuclease T2 (276 aa).

Positions 1-17 are cleaved as a signal peptide; sequence MGMLALGAMQLAAGAVF. Cystine bridges form between C22–C41, C30–C77, C40–C143, C85–C135, and C208–C242. N32 carries an N-linked (GlcNAc...) asparagine glycan. The active site involves H70. N93 carries an N-linked (GlcNAc...) asparagine glycan. Active-site residues include E128 and H132. N256 is a glycosylation site (N-linked (GlcNAc...) asparagine).

Belongs to the RNase T2 family.

The catalysed reaction is a ribonucleotidyl-ribonucleotide-RNA + H2O = a 3'-end 3'-phospho-ribonucleotide-RNA + a 5'-end dephospho-ribonucleoside-RNA + H(+). This Aspergillus oryzae (strain ATCC 42149 / RIB 40) (Yellow koji mold) protein is Ribonuclease T2 (rntB).